We begin with the raw amino-acid sequence, 74 residues long: Putative membrane protein insertion efficiency factor (74 aa).

The protein belongs to the UPF0161 family.

Its subcellular location is the cell inner membrane. In terms of biological role, could be involved in insertion of integral membrane proteins into the membrane. This chain is Putative membrane protein insertion efficiency factor, found in Blochmanniella floridana.